Here is a 526-residue protein sequence, read N- to C-terminus: Vang-like protein 2 (526 aa).

A disordered region spans residues 1–95 (MDNESQYSGY…NEDLTRASKE (95 aa)). Over 1-109 (MDNESQYSGY…SPLECRRFAG (109 aa)) the chain is Cytoplasmic. The segment covering 15-33 (SHSRSSRKHRDRRDRHRSK) has biased composition (basic residues). Composition is skewed to basic and acidic residues over residues 34 to 43 (SRDSSSRGDK) and 58 to 68 (ESTRGDDRDDN). The span at 70-83 (GETTTVVTGTSEHS) shows a compositional bias: low complexity. Positions 84-95 (VSNEDLTRASKE) are enriched in basic and acidic residues. The chain crosses the membrane as a helical span at residues 110–130 (PIVSGVLGLFALLTPLAFLLL). Over 131–148 (PQLLWRDSLEPCGTPCEG) the chain is Extracellular. The helical transmembrane segment at 149–169 (LYVSLAFKLLVLLISSWALFL) threads the bilayer. At 170–178 (RPSRSTLPR) the chain is on the cytoplasmic side. A helical transmembrane segment spans residues 179–199 (FFVFRCLLMALVFLFVASYWL). Residues 200 to 215 (FYGVRVLEPRERDYRG) lie on the Extracellular side of the membrane. The chain crosses the membrane as a helical span at residues 216-236 (IVGYAVSLVDALLFIQYLALV). At 237-526 (LLEVRHLRPA…VMRLQSETSV (290 aa)) the chain is on the cytoplasmic side. A PDZ-binding motif is present at residues 523 to 526 (ETSV).

Belongs to the Vang family. In terms of assembly, interacts with the PDZ domain of dvl2/dsh. In terms of tissue distribution, ubiquitously expressed at the 4-cell stage. In early somitogenesis, becomes more abundant in anterior neural tissue where expression is seen in the neural tube but not in the notochord.

The protein resides in the cell membrane. Functionally, plays a role in non-canonical Wnt/planar cell polarity (PCP) signaling to regulate convergent extension cell movements during gastrulation. Acts together with scrib and prickle1 and localizes prickle1 and dvl2/dsh to the plasma membrane. Has an overlapping role with kny during both convergent extension and eye development. In the eye, involved in establishing proper alignment of the anterior neural plate and midline cells expressing shha and shhb/twhh. Has indirect effects on a number of other developmental processes including notochord shape formation, neural progenitor cell morphogenesis, segregation of somites and adaxial cell development. Together with prickle1, required for the posterior (caudal) movement of branchiomotor neurons in the hindbrain independently of, and a few hours after, convergent extension. May be required for cell surface localization of fzd3 and fzd6 in the inner ear. This is Vang-like protein 2 from Danio rerio (Zebrafish).